A 173-amino-acid chain; its full sequence is Peptidyl-prolyl cis-trans isomerase cyp3 (173 aa).

In terms of domain architecture, PPIase cyclophilin-type spans 8-172 (FMDIAIDGRL…SNVAIVECGE (165 aa)).

This sequence belongs to the cyclophilin-type PPIase family. PPIase H subfamily.

It localises to the cytoplasm. The protein resides in the cytoskeleton. The protein localises to the microtubule organizing center. Its subcellular location is the spindle pole body. The catalysed reaction is [protein]-peptidylproline (omega=180) = [protein]-peptidylproline (omega=0). Its function is as follows. PPIases accelerate the folding of proteins. It catalyzes the cis-trans isomerization of proline imidic peptide bonds in oligopeptides. This Schizosaccharomyces pombe (strain 972 / ATCC 24843) (Fission yeast) protein is Peptidyl-prolyl cis-trans isomerase cyp3 (cyp3).